The following is a 343-amino-acid chain: DNA-directed RNA polymerase subunit alpha (343 aa).

An alpha N-terminal domain (alpha-NTD) region spans residues 1–239; sequence MGETVTIQKN…DQLNVFVNFE (239 aa). The segment at 255 to 343 is alpha C-terminal domain (alpha-CTD); that stretch reads FNPAFLKKVD…ELAKRFEDHY (89 aa).

This sequence belongs to the RNA polymerase alpha chain family. Homodimer. The RNAP catalytic core consists of 2 alpha, 1 beta, 1 beta' and 1 omega subunit. When a sigma factor is associated with the core the holoenzyme is formed, which can initiate transcription.

It catalyses the reaction RNA(n) + a ribonucleoside 5'-triphosphate = RNA(n+1) + diphosphate. DNA-dependent RNA polymerase catalyzes the transcription of DNA into RNA using the four ribonucleoside triphosphates as substrates. The sequence is that of DNA-directed RNA polymerase subunit alpha from Bradyrhizobium sp. (strain BTAi1 / ATCC BAA-1182).